Reading from the N-terminus, the 232-residue chain is Octanoyltransferase (232 aa).

The 188-residue stretch at 32–219 folds into the BPL/LPL catalytic domain; it reads NIIYDTLILL…SFKVFNFSSY (188 aa). Substrate contacts are provided by residues 77–84, 140–142, and 153–155; these read RGGDITYH, AIG, and GFA. The active-site Acyl-thioester intermediate is Cys171.

It belongs to the LipB family.

It localises to the cytoplasm. The catalysed reaction is octanoyl-[ACP] + L-lysyl-[protein] = N(6)-octanoyl-L-lysyl-[protein] + holo-[ACP] + H(+). Its pathway is protein modification; protein lipoylation via endogenous pathway; protein N(6)-(lipoyl)lysine from octanoyl-[acyl-carrier-protein]: step 1/2. Its function is as follows. Catalyzes the transfer of endogenously produced octanoic acid from octanoyl-acyl-carrier-protein onto the lipoyl domains of lipoate-dependent enzymes. Lipoyl-ACP can also act as a substrate although octanoyl-ACP is likely to be the physiological substrate. The protein is Octanoyltransferase of Dictyoglomus turgidum (strain DSM 6724 / Z-1310).